The sequence spans 358 residues: Protein-glutamate methylesterase/protein-glutamine glutaminase 1 (358 aa).

One can recognise a Response regulatory domain in the interval 8 to 125; the sequence is RVLIVDDSAV…ARGLEGYAEE (118 aa). Position 59 is a 4-aspartylphosphate (Asp59). One can recognise a CheB-type methylesterase domain in the interval 157 to 352; that stretch reads PVPGSALRFR…LERVAERLIA (196 aa). Catalysis depends on residues Ser177, His203, and Asp299.

Belongs to the CheB family. In terms of processing, phosphorylated by CheA. Phosphorylation of the N-terminal regulatory domain activates the methylesterase activity.

Its subcellular location is the cytoplasm. It catalyses the reaction [protein]-L-glutamate 5-O-methyl ester + H2O = L-glutamyl-[protein] + methanol + H(+). It carries out the reaction L-glutaminyl-[protein] + H2O = L-glutamyl-[protein] + NH4(+). Its function is as follows. Involved in chemotaxis. Part of a chemotaxis signal transduction system that modulates chemotaxis in response to various stimuli. Catalyzes the demethylation of specific methylglutamate residues introduced into the chemoreceptors (methyl-accepting chemotaxis proteins or MCP) by CheR. Also mediates the irreversible deamidation of specific glutamine residues to glutamic acid. This Xanthomonas campestris pv. campestris (strain ATCC 33913 / DSM 3586 / NCPPB 528 / LMG 568 / P 25) protein is Protein-glutamate methylesterase/protein-glutamine glutaminase 1.